The sequence spans 2587 residues: Clavatol synthase claF (2587 aa).

Residues 93 to 256 are N-terminal acylcarrier protein transacylase domain (SAT); sequence LLSPLVVIVQ…TEVALSGRFH (164 aa). Residue cysteine 137 is the Nucleophile; for transacylase activity of the active site. The active-site Proton donor/acceptor; for transacylase activity is the histidine 256. A Ketosynthase family 3 (KS3) domain is found at 383–799; the sequence is DDQIAVIGMA…GSNASMIITQ (417 aa). Catalysis depends on for beta-ketoacyl synthase activity residues cysteine 548, histidine 683, and histidine 722. A malonyl-CoA:ACP transacylase (MAT) domain region spans residues 912-1222; sequence CFGGQISTYV…ESLPLLAEAT (311 aa). Positions 1284 to 1416 are N-terminal hotdog fold; that stretch reads PKGLTTFIGF…GSIVFLPASD (133 aa). The region spanning 1284-1595 is the PKS/mFAS DH domain; that stretch reads PKGLTTFIGF…YRLVPMDSMR (312 aa). The product template (PT) domain stretch occupies residues 1315-1593; it reads LTSANVALNT…ISYRLVPMDS (279 aa). The C-terminal hotdog fold stretch occupies residues 1436-1595; that stretch reads ASLLQGNGAD…YRLVPMDSMR (160 aa). The interval 1609-1635 is disordered; sequence STAAVSSKSTPVHAPTPTTTVSSTPSS. Residues 1617–1635 are compositionally biased toward low complexity; the sequence is STPVHAPTPTTTVSSTPSS. The Carrier domain maps to 1654 to 1728; the sequence is PDISAKMCEI…SLVSCIRSTL (75 aa). Serine 1688 carries the O-(pantetheine 4'-phosphoryl)serine modification. Residues tyrosine 1947, histidine 2059, and glutamate 2085 each act as for methyltransferase activity in the active site. The methyltransferase (CMeT) domain stretch occupies residues 1952–2126; sequence VNTVWIKQLE…ATYWEKVLQS (175 aa). The interval 2208 to 2452 is NADPH-binding (R) domain; it reads SLSSGQCVLV…KILPELDGTL (245 aa).

Pantetheine 4'-phosphate is required as a cofactor.

It catalyses the reaction 3 malonyl-CoA + acetyl-CoA + AH2 + 2 S-adenosyl-L-methionine + H(+) = clavatol + A + 2 S-adenosyl-L-homocysteine + 3 CO2 + 4 CoA + H2O. Its pathway is secondary metabolite biosynthesis. Its function is as follows. Non-reducing polyketide synthase; part of the cla gene cluster that produces clavatol and ortho-quinone methide. The clavatol biosynthesis cluster cla and the terrestric acid cluster tra are both involved in the production of peniphenones and penilactones. The non-reducing PKS claF is responsible for the formation of clavatol from successive condensations of 3 malonyl-CoA units, presumably with a simple acetyl-CoA starter unit, and 2 methylation steps. The esterase claE probably collaborates with claF by catalyzing the hydrolysis of ACP-bound acyl intermediates to free the ACP from stalled intermediates. The clavatol oxidase claD then converts clavatol to hydroxyclavatol. Spontaneous dehydration of hydroxyclavatol leads to the accumulation of the highly active ortho-quinone methide. On the other hand, the PKS-NRPS hybrid traA is involved in the formation of crustosic acid, with the help of traB and traD. The polyketide synthase module (PKS) of traA is responsible for the synthesis of the polyketide backbone via the condensation of an acetyl-CoA starter unit with 3 malonyl-CoA units. The downstream nonribosomal peptide synthetase (NRPS) module then amidates the carboxyl end of the polyketide with L-malic acid. Because traA lacks a designated enoylreductase (ER) domain, the required activity is provided the enoyl reductase traG. Crustosic acid undergoes decarboxylation and isomerization to the terrestric acid, catalyzed by the 2-oxoglutarate-dependent dioxygenase traH. Both acids are further converted to the 2 gamma-butyrolactones (R)-5-methyltetronic acid and (S)-5-carboxylmethyltetronic acid, with involvement of the cytochrome P450 monooxygenase claJ. Spontaneous addition of the methide to these gamma-butyrolactones leads to peniphenone D and penilactone D, which undergo again stereospecific attacking by methide to give penilactones A and B. The chain is Clavatol synthase claF from Penicillium crustosum (Blue mold fungus).